A 214-amino-acid chain; its full sequence is Protein-L-isoaspartate O-methyltransferase (214 aa).

Residue serine 63 is part of the active site.

Belongs to the methyltransferase superfamily. L-isoaspartyl/D-aspartyl protein methyltransferase family.

It is found in the cytoplasm. It carries out the reaction [protein]-L-isoaspartate + S-adenosyl-L-methionine = [protein]-L-isoaspartate alpha-methyl ester + S-adenosyl-L-homocysteine. Its function is as follows. Catalyzes the methyl esterification of L-isoaspartyl residues in peptides and proteins that result from spontaneous decomposition of normal L-aspartyl and L-asparaginyl residues. It plays a role in the repair and/or degradation of damaged proteins. The chain is Protein-L-isoaspartate O-methyltransferase from Desulfotalea psychrophila (strain LSv54 / DSM 12343).